A 582-amino-acid chain; its full sequence is Putative frv operon regulatory protein (582 aa).

A DNA-binding region (H-T-H motif) is located at residues 20–39; that stretch reads PGELAQQTGVSGRTILRDID. The 140-residue stretch at 443 to 582 folds into the PTS EIIA type-2 domain; that stretch reads RFFSAPGSFH…EAFMELLHKG (140 aa). H505 is modified (phosphohistidine; by HPr).

Could be involved in the regulation of the transcription of the FRV operon. This Escherichia coli (strain K12) protein is Putative frv operon regulatory protein (frvR).